The sequence spans 459 residues: Glycosyl hydrolase family 109 protein 1 (459 aa).

Residues M1–A31 constitute a signal peptide (tat-type signal). Residues E64 to R65, D86, W135 to H138, E155 to V156, and N184 contribute to the NAD(+) site. Substrate-binding positions include Y213, R232, Y244–H247, and Y326. Y244 is an NAD(+) binding site.

Belongs to the Gfo/Idh/MocA family. Glycosyl hydrolase 109 subfamily. Requires NAD(+) as cofactor. Predicted to be exported by the Tat system. The position of the signal peptide cleavage has not been experimentally proven.

In terms of biological role, glycosidase. The protein is Glycosyl hydrolase family 109 protein 1 of Shewanella sp. (strain MR-7).